The chain runs to 454 residues: MQIVVVGVDYKTAPVEIREKLAFAEAELGAAMKQLAKQKSVLENVIVSTCNRTEVYAVVDQLHTGRYYMKAFLAEWFGVKVEAIAPYLRVLEGEAAIKHLFRVAAGLDSMVLGETQILGQVKDSYLLAQEVGTSGTIFNHLFKQAVTFAKRAHSETGIGAHAVSVSYAAVELAKKIFGRLAGKHVLIIGAGKMGTLAAQNLYGSGVGKVTVVNRTLEKAKQLAKQFAGEAKPLGELSCALLEADIVISSTGAKGYILTKEMVAPLEKMRKGRPLFMVDIAVPRDLDPALADLETVFLYDIDDLQDVVAANLAERQKAAARIETMIEAELMAFSQWLQTLGVVPVIAALREKALAIQAETMKSLERKLPHLSERDWKVLNKHTKSIINQLLRDPILQAKELAAGPNAEEALLLFMKIFNIEDAVKAERHIEQAKSVQCDEQDAEAVRAARPSWQL.

Substrate-binding positions include 49-52 (TCNR), Ser109, 114-116 (ETQ), and Gln120. The active-site Nucleophile is Cys50. 189–194 (GAGKMG) is a binding site for NADP(+).

It belongs to the glutamyl-tRNA reductase family. Homodimer.

It catalyses the reaction (S)-4-amino-5-oxopentanoate + tRNA(Glu) + NADP(+) = L-glutamyl-tRNA(Glu) + NADPH + H(+). It functions in the pathway porphyrin-containing compound metabolism; protoporphyrin-IX biosynthesis; 5-aminolevulinate from L-glutamyl-tRNA(Glu): step 1/2. Catalyzes the NADPH-dependent reduction of glutamyl-tRNA(Glu) to glutamate 1-semialdehyde (GSA). This chain is Glutamyl-tRNA reductase, found in Geobacillus kaustophilus (strain HTA426).